We begin with the raw amino-acid sequence, 103 residues long: Protein S100-A16 (103 aa).

Residues 12 to 47 (VVVLVENFYKYVSKHSLVKNKISKSSFRKMLQKELN) form the EF-hand 1; degenerate domain. An EF-hand 2 domain is found at 54–89 (GNRKAADKLIQNLDANHDGRISFDEYWTLIGGITSP). Ca(2+) is bound by residues D67, N69, D71, R73, and E78.

Belongs to the S-100 family. In terms of assembly, homodimer. Interacts with TP53.

The protein resides in the nucleus. Its subcellular location is the nucleolus. The protein localises to the cytoplasm. Its function is as follows. Calcium-binding protein. Binds one calcium ion per monomer. Can promote differentiation of adipocytes (in vitro). Overexpression in preadipocytes increases their proliferation, enhances adipogenesis and reduces insulin-stimulated glucose uptake. This chain is Protein S100-A16 (S100A16), found in Bos taurus (Bovine).